Consider the following 290-residue polypeptide: Ribonuclease 3 (290 aa).

The RNase III domain occupies 20 to 145; sequence YSCFYRILGF…FIGAIYLDRG (126 aa). A Mg(2+)-binding site is contributed by Glu-62. Asp-66 is an active-site residue. The Mg(2+) site is built by Asn-131 and Glu-134. Glu-134 is a catalytic residue. Residues 173-242 enclose the DRBM domain; that stretch reads NFKSKLIEWS…AQMTLKKIKG (70 aa). The disordered stretch occupies residues 254–290; that stretch reads KTQNNVPAEDTTPESETSLTAENQQIDEIISTEEISV. Polar residues predominate over residues 267-279; it reads ESETSLTAENQQI.

The protein belongs to the ribonuclease III family. In terms of assembly, homodimer. It depends on Mg(2+) as a cofactor.

It is found in the cytoplasm. It catalyses the reaction Endonucleolytic cleavage to 5'-phosphomonoester.. In terms of biological role, digests double-stranded RNA. Involved in the processing of primary rRNA transcript to yield the immediate precursors to the large and small rRNAs (23S and 16S). Processes some mRNAs, and tRNAs when they are encoded in the rRNA operon. Processes pre-crRNA and tracrRNA of type II CRISPR loci if present in the organism. This is Ribonuclease 3 from Bacteroides fragilis (strain ATCC 25285 / DSM 2151 / CCUG 4856 / JCM 11019 / LMG 10263 / NCTC 9343 / Onslow / VPI 2553 / EN-2).